The following is a 353-amino-acid chain: Holliday junction branch migration complex subunit RuvB (353 aa).

Positions 4–185 (ADRLITATGG…FGIVQRLEFY (182 aa)) are large ATPase domain (RuvB-L). ATP contacts are provided by residues isoleucine 24, arginine 25, glycine 66, lysine 69, threonine 70, threonine 71, 132–134 (EDF), arginine 175, tyrosine 185, and arginine 222. Threonine 70 serves as a coordination point for Mg(2+). Residues 186 to 256 (NIADLSTIVS…TADKALNLLD (71 aa)) form a small ATPAse domain (RuvB-S) region. The interval 259 to 353 (EHGFDHQDRR…DDFGDEPVDL (95 aa)) is head domain (RuvB-H). DNA is bound by residues arginine 295, arginine 314, and arginine 319.

Belongs to the RuvB family. In terms of assembly, homohexamer. Forms an RuvA(8)-RuvB(12)-Holliday junction (HJ) complex. HJ DNA is sandwiched between 2 RuvA tetramers; dsDNA enters through RuvA and exits via RuvB. An RuvB hexamer assembles on each DNA strand where it exits the tetramer. Each RuvB hexamer is contacted by two RuvA subunits (via domain III) on 2 adjacent RuvB subunits; this complex drives branch migration. In the full resolvosome a probable DNA-RuvA(4)-RuvB(12)-RuvC(2) complex forms which resolves the HJ.

It localises to the cytoplasm. It carries out the reaction ATP + H2O = ADP + phosphate + H(+). In terms of biological role, the RuvA-RuvB-RuvC complex processes Holliday junction (HJ) DNA during genetic recombination and DNA repair, while the RuvA-RuvB complex plays an important role in the rescue of blocked DNA replication forks via replication fork reversal (RFR). RuvA specifically binds to HJ cruciform DNA, conferring on it an open structure. The RuvB hexamer acts as an ATP-dependent pump, pulling dsDNA into and through the RuvAB complex. RuvB forms 2 homohexamers on either side of HJ DNA bound by 1 or 2 RuvA tetramers; 4 subunits per hexamer contact DNA at a time. Coordinated motions by a converter formed by DNA-disengaged RuvB subunits stimulates ATP hydrolysis and nucleotide exchange. Immobilization of the converter enables RuvB to convert the ATP-contained energy into a lever motion, pulling 2 nucleotides of DNA out of the RuvA tetramer per ATP hydrolyzed, thus driving DNA branch migration. The RuvB motors rotate together with the DNA substrate, which together with the progressing nucleotide cycle form the mechanistic basis for DNA recombination by continuous HJ branch migration. Branch migration allows RuvC to scan DNA until it finds its consensus sequence, where it cleaves and resolves cruciform DNA. In Pseudomonas syringae pv. syringae (strain B728a), this protein is Holliday junction branch migration complex subunit RuvB.